A 231-amino-acid polypeptide reads, in one-letter code: Orotidine 5'-phosphate decarboxylase (231 aa).

Substrate is bound by residues Asp-11, Lys-33, 60-69, Thr-120, Arg-181, Gln-190, Gly-210, and Arg-211; that span reads DLKFHDIPNT. Lys-62 (proton donor) is an active-site residue.

It belongs to the OMP decarboxylase family. Type 1 subfamily. Homodimer.

It catalyses the reaction orotidine 5'-phosphate + H(+) = UMP + CO2. The protein operates within pyrimidine metabolism; UMP biosynthesis via de novo pathway; UMP from orotate: step 2/2. Functionally, catalyzes the decarboxylation of orotidine 5'-monophosphate (OMP) to uridine 5'-monophosphate (UMP). The sequence is that of Orotidine 5'-phosphate decarboxylase from Vibrio cholerae serotype O1 (strain ATCC 39315 / El Tor Inaba N16961).